The primary structure comprises 349 residues: KH domain-containing, RNA-binding, signal transduction-associated protein 2 (349 aa).

The KH domain maps to 65–135 (LIPVKQYPKF…HLSDELHVLI (71 aa)). Disordered stretches follow at residues 181–263 (SEES…PPPA) and 321–349 (EWAT…YGRY). Over residues 218–231 (RGVLTPRGTTVTRG) the composition is skewed to low complexity. Omega-N-methylarginine is present on residues Arg230 and Arg240. Positions 340-349 (GYREHPYGRY) are enriched in basic and acidic residues.

The protein belongs to the KHDRBS family. In terms of assembly, self-associates to form homooligomers. Interacts with KHDRBS1/SAM68; heterooligomer formation of KHDRBS family proteins may modulate RNA substrate specificity. Interacts with RBMX, SAFB, SFRS9 and YTHDC1. Interacts with FYN and PLCG1 (via SH3 domain). Interacts (phosphorylated) with FYN, GRB2, PLCG1 and RASA1 (via SH2 domain). Methylated. In terms of processing, tyrosine phosphorylated by FYN, PTK6 and SRC. Tyrosine phosphorylated by SRC during mitosis. In terms of tissue distribution, expressed in heart, skin, brain, colon, spleen, kidney, cervix and testis. In adult cerebellum expressed predominantly in Purkinje cells and in the hippocampus is abundantly expressed in glutamatergic dentate granule cells and in specific inhibitory Schaffer collateral-associated and path-associated interneurons; expression is restricted to neuronal subpopulations largely non-overlapping with expression of KHDRBS3/SLM-2 (at protein level).

The protein localises to the nucleus. RNA-binding protein that plays a role in the regulation of alternative splicing and influences mRNA splice site selection and exon inclusion. Binds both poly(A) and poly(U) homopolymers. Phosphorylation by PTK6 inhibits its RNA-binding ability. Induces an increased concentration-dependent incorporation of exon in CD44 pre-mRNA by direct binding to purine-rich exonic enhancer. Can regulate alternative splicing of neurexins NRXN1-3 in the laminin G-like domain 6 containing the evolutionary conserved neurexin alternative spliced segment 4 (AS4) involved in neurexin selective targeting to postsynaptic partners. Regulates cell-type specific alternative splicing of NRXN1 at AS4 and acts synergystically with SAM68 in exon skipping. In contrast acts antagonistically with SAM68 in NRXN3 exon skipping at AS4. Its phosphorylation by FYN inhibits its ability to regulate splice site selection. May function as an adapter protein for Src kinases during mitosis. The sequence is that of KH domain-containing, RNA-binding, signal transduction-associated protein 2 (Khdrbs2) from Mus musculus (Mouse).